A 137-amino-acid polypeptide reads, in one-letter code: Large ribosomal subunit protein uL16 (137 aa).

This sequence belongs to the universal ribosomal protein uL16 family. As to quaternary structure, part of the 50S ribosomal subunit.

Functionally, binds 23S rRNA and is also seen to make contacts with the A and possibly P site tRNAs. The sequence is that of Large ribosomal subunit protein uL16 from Pseudomonas syringae pv. tomato (strain ATCC BAA-871 / DC3000).